The following is a 465-amino-acid chain: ATP synthase subunit beta (465 aa).

151–158 (GGAGVGKT) is an ATP binding site.

The protein belongs to the ATPase alpha/beta chains family. In terms of assembly, F-type ATPases have 2 components, CF(1) - the catalytic core - and CF(0) - the membrane proton channel. CF(1) has five subunits: alpha(3), beta(3), gamma(1), delta(1), epsilon(1). CF(0) has four main subunits: a(1), b(1), b'(1) and c(9-12).

Its subcellular location is the cell inner membrane. The catalysed reaction is ATP + H2O + 4 H(+)(in) = ADP + phosphate + 5 H(+)(out). Functionally, produces ATP from ADP in the presence of a proton gradient across the membrane. The catalytic sites are hosted primarily by the beta subunits. This is ATP synthase subunit beta from Chloroherpeton thalassium (strain ATCC 35110 / GB-78).